The sequence spans 334 residues: Holliday junction branch migration complex subunit RuvB (334 aa).

Residues 4–184 (ADRLIAADAQ…FGIVQRLEFY (181 aa)) form a large ATPase domain (RuvB-L) region. ATP contacts are provided by residues isoleucine 23, arginine 24, glycine 65, lysine 68, threonine 69, threonine 70, 131-133 (EDY), arginine 174, tyrosine 184, and arginine 221. Threonine 69 contacts Mg(2+). The tract at residues 185–255 (QVADLQHIVG…VAAQALNMLD (71 aa)) is small ATPAse domain (RuvB-S). Positions 258-334 (AAGFDYMDRK…YQHFGIDRAE (77 aa)) are head domain (RuvB-H). DNA is bound by residues arginine 294, arginine 313, and arginine 318.

This sequence belongs to the RuvB family. As to quaternary structure, homohexamer. Forms an RuvA(8)-RuvB(12)-Holliday junction (HJ) complex. HJ DNA is sandwiched between 2 RuvA tetramers; dsDNA enters through RuvA and exits via RuvB. An RuvB hexamer assembles on each DNA strand where it exits the tetramer. Each RuvB hexamer is contacted by two RuvA subunits (via domain III) on 2 adjacent RuvB subunits; this complex drives branch migration. In the full resolvosome a probable DNA-RuvA(4)-RuvB(12)-RuvC(2) complex forms which resolves the HJ.

It localises to the cytoplasm. The catalysed reaction is ATP + H2O = ADP + phosphate + H(+). Its function is as follows. The RuvA-RuvB-RuvC complex processes Holliday junction (HJ) DNA during genetic recombination and DNA repair, while the RuvA-RuvB complex plays an important role in the rescue of blocked DNA replication forks via replication fork reversal (RFR). RuvA specifically binds to HJ cruciform DNA, conferring on it an open structure. The RuvB hexamer acts as an ATP-dependent pump, pulling dsDNA into and through the RuvAB complex. RuvB forms 2 homohexamers on either side of HJ DNA bound by 1 or 2 RuvA tetramers; 4 subunits per hexamer contact DNA at a time. Coordinated motions by a converter formed by DNA-disengaged RuvB subunits stimulates ATP hydrolysis and nucleotide exchange. Immobilization of the converter enables RuvB to convert the ATP-contained energy into a lever motion, pulling 2 nucleotides of DNA out of the RuvA tetramer per ATP hydrolyzed, thus driving DNA branch migration. The RuvB motors rotate together with the DNA substrate, which together with the progressing nucleotide cycle form the mechanistic basis for DNA recombination by continuous HJ branch migration. Branch migration allows RuvC to scan DNA until it finds its consensus sequence, where it cleaves and resolves cruciform DNA. The polypeptide is Holliday junction branch migration complex subunit RuvB (Edwardsiella ictaluri (strain 93-146)).